The following is a 292-amino-acid chain: Probable septum site-determining protein MinC (292 aa).

Positions 112–188 (DTAPPNDVAT…PQSSSALVIT (77 aa)) are disordered. Positions 128–137 (EATAEAAAKA) are enriched in low complexity. Positions 140–150 (QDDEAYGEQAD) are enriched in acidic residues. Residues 171–185 (ANRPTATPPQSSSAL) are compositionally biased toward polar residues.

It belongs to the MinC family. As to quaternary structure, interacts with MinD and FtsZ.

Cell division inhibitor that blocks the formation of polar Z ring septums. Rapidly oscillates between the poles of the cell to destabilize FtsZ filaments that have formed before they mature into polar Z rings. Prevents FtsZ polymerization. The chain is Probable septum site-determining protein MinC from Bordetella bronchiseptica (strain ATCC BAA-588 / NCTC 13252 / RB50) (Alcaligenes bronchisepticus).